Here is a 398-residue protein sequence, read N- to C-terminus: UDP-N-acetylglucosamine--N-acetylmuramyl-(pentapeptide) pyrophosphoryl-undecaprenol N-acetylglucosamine transferase (398 aa).

UDP-N-acetyl-alpha-D-glucosamine is bound by residues 11-13 (TGG), Asn124, Arg164, Ser192, and Gln318.

The protein belongs to the glycosyltransferase 28 family. MurG subfamily.

It is found in the cell membrane. The catalysed reaction is di-trans,octa-cis-undecaprenyl diphospho-N-acetyl-alpha-D-muramoyl-L-alanyl-D-glutamyl-meso-2,6-diaminopimeloyl-D-alanyl-D-alanine + UDP-N-acetyl-alpha-D-glucosamine = di-trans,octa-cis-undecaprenyl diphospho-[N-acetyl-alpha-D-glucosaminyl-(1-&gt;4)]-N-acetyl-alpha-D-muramoyl-L-alanyl-D-glutamyl-meso-2,6-diaminopimeloyl-D-alanyl-D-alanine + UDP + H(+). The protein operates within cell wall biogenesis; peptidoglycan biosynthesis. Cell wall formation. Catalyzes the transfer of a GlcNAc subunit on undecaprenyl-pyrophosphoryl-MurNAc-pentapeptide (lipid intermediate I) to form undecaprenyl-pyrophosphoryl-MurNAc-(pentapeptide)GlcNAc (lipid intermediate II). The polypeptide is UDP-N-acetylglucosamine--N-acetylmuramyl-(pentapeptide) pyrophosphoryl-undecaprenol N-acetylglucosamine transferase (Deinococcus radiodurans (strain ATCC 13939 / DSM 20539 / JCM 16871 / CCUG 27074 / LMG 4051 / NBRC 15346 / NCIMB 9279 / VKM B-1422 / R1)).